A 60-amino-acid polypeptide reads, in one-letter code: Large ribosomal subunit protein bL32 (60 aa).

The span at methionine 1–arginine 16 shows a compositional bias: basic residues. Positions methionine 1–alanine 60 are disordered. A compositionally biased stretch (basic and acidic residues) spans arginine 17–leucine 44.

It belongs to the bacterial ribosomal protein bL32 family.

This is Large ribosomal subunit protein bL32 from Bradyrhizobium sp. (strain BTAi1 / ATCC BAA-1182).